Consider the following 592-residue polypeptide: Putative phosphatidylinositol 4-kinase alpha-like protein P2 (592 aa).

The tract at residues 180–318 (EQLVEENTGS…ISWQAAIFKL (139 aa)) is pleckstrin homology (PH) domain conferring phosphoinositide binding specificity. The PI3K/PI4K catalytic domain maps to 275–576 (KVKRCGVSEL…VIQSCFLSNR (302 aa)). The tract at residues 281–287 (VSELEKE) is G-loop. Residues 441–449 (QIKDRHNGN) form a catalytic loop region. The activation loop stretch occupies residues 460–484 (HIDFGFMFESSPGGNLGWEPDIKLT).

This sequence belongs to the PI3/PI4-kinase family. Type III PI4K subfamily.

The chain is Putative phosphatidylinositol 4-kinase alpha-like protein P2 (PI4KAP2) from Homo sapiens (Human).